The primary structure comprises 192 residues: Fe/S biogenesis protein NfuA (192 aa).

[4Fe-4S] cluster is bound by residues C149 and C152.

This sequence belongs to the NfuA family. Homodimer. [4Fe-4S] cluster serves as cofactor.

Functionally, involved in iron-sulfur cluster biogenesis. Binds a 4Fe-4S cluster, can transfer this cluster to apoproteins, and thereby intervenes in the maturation of Fe/S proteins. Could also act as a scaffold/chaperone for damaged Fe/S proteins. In Shewanella halifaxensis (strain HAW-EB4), this protein is Fe/S biogenesis protein NfuA.